A 453-amino-acid chain; its full sequence is Presenilin-like protein At1g08700 (453 aa).

Over Met-1 to Ser-8 the chain is Cytoplasmic. The chain crosses the membrane as a helical span at residues Leu-9–Leu-29. Over Leu-30–Asn-68 the chain is Lumenal. Residues Ala-69–Tyr-89 traverse the membrane as a helical segment. At Asn-90–Ala-103 the chain is on the cytoplasmic side. A helical transmembrane segment spans residues Phe-104 to Ile-124. Over Pro-125–Phe-132 the chain is Lumenal. Residues Ile-133–Ile-153 form a helical membrane-spanning segment. Topologically, residues Val-154–Tyr-159 are cytoplasmic. 2 helical membrane-spanning segments follow: residues Met-160–Trp-180 and Phe-181–Leu-201. Asp-190 is a catalytic residue. Over Lys-202 to Lys-369 the chain is Cytoplasmic. 2 disordered regions span residues Val-226–Val-248 and Ile-292–Ser-329. A compositionally biased stretch (low complexity) spans Ser-227–Arg-240. The residue at position 296 (Ser-296) is a Phosphoserine. Residues Pro-309 to Thr-320 show a composition bias toward polar residues. The chain crosses the membrane as a helical span at residues Leu-370–Leu-390. The active site involves Asp-374. Over Met-391–Thr-392 the chain is Lumenal. The helical transmembrane segment at Val-393 to Val-413 threads the bilayer. Topologically, residues Tyr-414–Ala-417 are cytoplasmic. Positions Leu-418–Leu-438 form an intramembrane region, helical. A PAL motif is present at residues Pro-419 to Leu-421. Topologically, residues Met-439–Phe-453 are cytoplasmic.

This sequence belongs to the peptidase A22A family. Homodimer. Probable component of the gamma-secretase complex, a complex composed of a presenilin homodimer, nicastrin, APH1 and PEN2.

The protein resides in the endoplasmic reticulum membrane. It localises to the golgi apparatus membrane. Its function is as follows. Probable subunit of the gamma-secretase complex, an endoprotease complex that catalyzes the intramembrane cleavage of integral membrane proteins such as Notch receptors. In Arabidopsis thaliana (Mouse-ear cress), this protein is Presenilin-like protein At1g08700.